A 585-amino-acid chain; its full sequence is A-type ATP synthase subunit A (585 aa).

231-238 (GPFGSGKT) contributes to the ATP binding site.

It belongs to the ATPase alpha/beta chains family. As to quaternary structure, has multiple subunits with at least A(3), B(3), C, D, E, F, H, I and proteolipid K(x).

It is found in the cell membrane. It carries out the reaction ATP + H2O + 4 H(+)(in) = ADP + phosphate + 5 H(+)(out). Functionally, component of the A-type ATP synthase that produces ATP from ADP in the presence of a proton gradient across the membrane. The A chain is the catalytic subunit. The protein is A-type ATP synthase subunit A of Thermococcus onnurineus (strain NA1).